We begin with the raw amino-acid sequence, 534 residues long: Probable protein kinase UbiB (534 aa).

The chain crosses the membrane as a helical span at residues 23-43 (DLLFDLPLPWFLLALRYVLPW). The region spanning 125–492 (RFDVEPLASA…WKKRKDDWFL (368 aa)) is the Protein kinase domain. ATP-binding positions include 131–139 (LASASVAQV) and Lys-153. Catalysis depends on Asp-288, which acts as the Proton acceptor. The next 2 helical transmembrane spans lie at 490–510 (WFLRLLGSAHLAGGTILAAGG) and 512–532 (LHELGHWPAGIMVAVGLYLVV).

Belongs to the ABC1 family. UbiB subfamily.

The protein resides in the cell inner membrane. The protein operates within cofactor biosynthesis; ubiquinone biosynthesis [regulation]. Functionally, is probably a protein kinase regulator of UbiI activity which is involved in aerobic coenzyme Q (ubiquinone) biosynthesis. The chain is Probable protein kinase UbiB from Pseudomonas fluorescens (strain Pf0-1).